We begin with the raw amino-acid sequence, 544 residues long: uncharacterized protein (544 aa).

14 helical membrane passes run 31–51, 52–72, 84–104, 116–136, 162–182, 191–211, 230–250, 257–277, 318–338, 356–376, 383–403, 407–427, 450–470, and 501–521; these read ILVF…AALA, GSVL…IGLL, LPWM…QWLI, WGLF…YTTV, FAFS…IAAG, FGEL…WSAL, LAPL…AKSF, GFDY…GFGF, FLFV…TASI, TIAL…QALA, VIYF…WLVQ, VALL…AYLI, FFYA…LFLV, and FAVA…AIFY.

This sequence belongs to the sodium:galactoside symporter (TC 2.A.2) family.

It localises to the cell membrane. This is an uncharacterized protein from Synechocystis sp. (strain ATCC 27184 / PCC 6803 / Kazusa).